The following is a 182-amino-acid chain: UPF0254 protein MK0012 (182 aa).

The protein belongs to the UPF0254 family.

The chain is UPF0254 protein MK0012 from Methanopyrus kandleri (strain AV19 / DSM 6324 / JCM 9639 / NBRC 100938).